Consider the following 826-residue polypeptide: MSKNRDRVALPPVNAQKTNMTCHFCIVGCGYHVYKWDENKEGGRAANQNALGLDFTKQLPPFATTLTPAMTNVITAKNGKRSNIMIIPDKECVVNQGLSSTRGGKMAGYMYAADGMTADRLKYPRFYAGDQWLDTSWDHAMAIYAGLTKKILDQGNVRDIMFATFDHGGAGGGFENTWGSGKLMFSAIQTPTVRIHNRPAYNSECHATREMGIGELNNSYEDAQVADVIWSIGNNPYETQTNYFLNHWLPNLNGSTEEKKKQWFAGEPVGPGLMIFVDPRRTTSIAIAEQTAKDRVLHLDINPGTDVALFNGLLTYVVQQGWIAKEFIAQHTVGFEDAVKTNQMSLADCSRITGVSEDKLRQAAEWSYKPKAAGKMPRTMHAYEKGIIWGNDNYNIQSSLLDLVIATQNVGRRGTGCVRMGGHQEGYVRPPHPTGEKIYVDQEIIQGKGRMMTWWGCNNFQTSNNAQALREVSLRRSQIVKDAMSKARGASAAEMVDIIYDATSKGGLFVTSINLYPTKLSEAAHLMLPAAHPGEMNLTSMNGERRMRLSEKFMDAPGDALPDCLIAAKAANTLKAMYEAEGKPEMVKRFSGFDWKTEEDAFNDGFRSAGQPGAEPIDSQGGSTGVLATYTLLRAAGTNGVQLPIKRVENGKMIGTAIHYDDNKFDTKDGKAHFKPAPWNGLPKPVEEQKAKHKFWLNNGRANEVWQSAYHDQYNDFVKSRYPLAYIELNPGDAQSLGVAAGDVVEVFNDYGSTFAMAYPVKDMKPSHTFMLFGYVNGIQGDVTTDWVDRNIIPYYKGTWGSVRRIGSIEQYKKTVSTKRRAFDNV.

Residues Cys22, Cys25, and Cys29 each contribute to the [3Fe-4S] cluster site. Residues His196, Glu204, Arg419, and His423 each contribute to the substrate site.

The protein belongs to the prokaryotic molybdopterin-containing oxidoreductase family. As to quaternary structure, heterodimer consisting of a large and a small subunit. [3Fe-4S] cluster serves as cofactor. It depends on Mo-bis(molybdopterin guanine dinucleotide) as a cofactor.

The catalysed reaction is 2 oxidized [azurin] + arsenite + H2O = 2 reduced [azurin] + arsenate + 3 H(+). Its function is as follows. Involved in the detoxification of arsenic. Oxidizes As(III)O3(3-) (arsenite) to the somewhat less toxic As(V)O4(3-) (arsenate). The polypeptide is Arsenite oxidase subunit AioA (aioA) (Herminiimonas arsenicoxydans).